The sequence spans 97 residues: Citrate lyase acyl carrier protein (97 aa).

Serine 14 bears the O-(phosphoribosyl dephospho-coenzyme A)serine mark.

The protein belongs to the CitD family. Oligomer with a subunit composition of (alpha,beta,gamma)6.

It localises to the cytoplasm. Its function is as follows. Covalent carrier of the coenzyme of citrate lyase. The chain is Citrate lyase acyl carrier protein from Lactobacillus helveticus (strain DPC 4571).